The following is a 142-amino-acid chain: Hemoglobin subunit alpha-1 (142 aa).

In terms of domain architecture, Globin spans 2 to 142 (LLSADDKKHI…VSSVLTSKYR (141 aa)). His59 lines the O2 pocket. Heme b is bound at residue His88.

The protein belongs to the globin family. In terms of assembly, heterotetramer of two alpha chains and two beta chains. As to expression, red blood cells.

Functionally, involved in oxygen transport from the lung to the various peripheral tissues. The chain is Hemoglobin subunit alpha-1 (hba1) from Xenopus borealis (Kenyan clawed frog).